A 581-amino-acid chain; its full sequence is Membrane protein insertase YidC (581 aa).

A helical transmembrane segment spans residues 7-27 (ILIVALAVVSYLMVLQWNEDY). A disordered region spans residues 41-62 (AATPALPDTPADTASTGGDDIP). 5 helical membrane-spanning segments follow: residues 365-385 (TVDY…LEVI), 388-408 (LLGN…LIFF), 458-478 (LGGC…YWVL), 489-509 (WMFW…PIIM), and 536-556 (PIIF…YWVV).

This sequence belongs to the OXA1/ALB3/YidC family. Type 1 subfamily. As to quaternary structure, interacts with the Sec translocase complex via SecD. Specifically interacts with transmembrane segments of nascent integral membrane proteins during membrane integration.

The protein resides in the cell inner membrane. In terms of biological role, required for the insertion and/or proper folding and/or complex formation of integral membrane proteins into the membrane. Involved in integration of membrane proteins that insert both dependently and independently of the Sec translocase complex, as well as at least some lipoproteins. Aids folding of multispanning membrane proteins. The sequence is that of Membrane protein insertase YidC from Ectopseudomonas mendocina (strain ymp) (Pseudomonas mendocina).